Consider the following 209-residue polypeptide: Large ribosomal subunit protein bL25 (209 aa).

Positions 183–209 (TAGERPAAEPAAAPGAAPAAGPEEAEE) are disordered. Over residues 184-209 (AGERPAAEPAAAPGAAPAAGPEEAEE) the composition is skewed to low complexity.

This sequence belongs to the bacterial ribosomal protein bL25 family. CTC subfamily. In terms of assembly, part of the 50S ribosomal subunit; part of the 5S rRNA/L5/L18/L25 subcomplex. Contacts the 5S rRNA. Binds to the 5S rRNA independently of L5 and L18.

This is one of the proteins that binds to the 5S RNA in the ribosome where it forms part of the central protuberance. This is Large ribosomal subunit protein bL25 from Pelotomaculum thermopropionicum (strain DSM 13744 / JCM 10971 / SI).